The sequence spans 820 residues: Leucine--tRNA ligase (820 aa).

A 'HIGH' region motif is present at residues 42–52 (PYPSGDLHMGH). Positions 576-580 (KMSKS) match the 'KMSKS' region motif. Lys-579 is a binding site for ATP.

This sequence belongs to the class-I aminoacyl-tRNA synthetase family.

It is found in the cytoplasm. The catalysed reaction is tRNA(Leu) + L-leucine + ATP = L-leucyl-tRNA(Leu) + AMP + diphosphate. In Coxiella burnetii (strain RSA 331 / Henzerling II), this protein is Leucine--tRNA ligase.